A 93-amino-acid polypeptide reads, in one-letter code: Pyrimidine/purine nucleoside phosphorylase (93 aa).

It belongs to the nucleoside phosphorylase PpnP family.

It carries out the reaction a purine D-ribonucleoside + phosphate = a purine nucleobase + alpha-D-ribose 1-phosphate. The catalysed reaction is adenosine + phosphate = alpha-D-ribose 1-phosphate + adenine. It catalyses the reaction cytidine + phosphate = cytosine + alpha-D-ribose 1-phosphate. The enzyme catalyses guanosine + phosphate = alpha-D-ribose 1-phosphate + guanine. It carries out the reaction inosine + phosphate = alpha-D-ribose 1-phosphate + hypoxanthine. The catalysed reaction is thymidine + phosphate = 2-deoxy-alpha-D-ribose 1-phosphate + thymine. It catalyses the reaction uridine + phosphate = alpha-D-ribose 1-phosphate + uracil. The enzyme catalyses xanthosine + phosphate = alpha-D-ribose 1-phosphate + xanthine. Catalyzes the phosphorolysis of diverse nucleosides, yielding D-ribose 1-phosphate and the respective free bases. Can use uridine, adenosine, guanosine, cytidine, thymidine, inosine and xanthosine as substrates. Also catalyzes the reverse reactions. This Sorangium cellulosum (strain So ce56) (Polyangium cellulosum (strain So ce56)) protein is Pyrimidine/purine nucleoside phosphorylase.